The following is a 50-amino-acid chain: uncharacterized protein (50 aa).

The tract at residues 1–50 is disordered; the sequence is MKTGFWQQVLPKRAGRRKEHPVQYMPHKKEENATGLMNPSLHTSHSAILK. Residues 35–50 are compositionally biased toward polar residues; it reads GLMNPSLHTSHSAILK.

This is an uncharacterized protein from Treponema pallidum (strain Nichols).